Here is a 435-residue protein sequence, read N- to C-terminus: 5-methylthioadenosine/S-adenosylhomocysteine deaminase (435 aa).

2 residues coordinate Zn(2+): His-65 and His-67. Substrate-binding residues include Glu-94, Arg-150, and His-189. Residue His-216 coordinates Zn(2+). Residues Glu-219 and Asp-304 each contribute to the substrate site. Asp-304 serves as a coordination point for Zn(2+).

The protein belongs to the metallo-dependent hydrolases superfamily. MTA/SAH deaminase family. The cofactor is Zn(2+).

The enzyme catalyses S-adenosyl-L-homocysteine + H2O + H(+) = S-inosyl-L-homocysteine + NH4(+). It catalyses the reaction S-methyl-5'-thioadenosine + H2O + H(+) = S-methyl-5'-thioinosine + NH4(+). Functionally, catalyzes the deamination of 5-methylthioadenosine and S-adenosyl-L-homocysteine into 5-methylthioinosine and S-inosyl-L-homocysteine, respectively. Is also able to deaminate adenosine. This chain is 5-methylthioadenosine/S-adenosylhomocysteine deaminase, found in Bacillus cereus (strain B4264).